The chain runs to 428 residues: uncharacterized protein (428 aa).

Residues 72-91 (SQGSPVAPSPNHRSTMYSSS) form a disordered region. Residue serine 127 is modified to Phosphoserine.

This is an uncharacterized protein from Saccharomyces cerevisiae (strain ATCC 204508 / S288c) (Baker's yeast).